We begin with the raw amino-acid sequence, 142 residues long: uncharacterized protein (142 aa).

The interval 19-54 (IHTTPHPHTPHHTHHTHTTPTPTPHPHTHTPTPERS) is disordered. A compositionally biased stretch (basic residues) spans 26–35 (HTPHHTHHTH).

This is an uncharacterized protein from Saccharomyces cerevisiae (strain ATCC 204508 / S288c) (Baker's yeast).